A 303-amino-acid polypeptide reads, in one-letter code: UDP-N-acetylenolpyruvoylglucosamine reductase (303 aa).

Residues 27–191 (VGGPAARLYK…ISAKLQLTPG (165 aa)) enclose the FAD-binding PCMH-type domain. Arginine 171 is a catalytic residue. The active-site Proton donor is serine 220. The active site involves glutamate 291.

The protein belongs to the MurB family. The cofactor is FAD.

The protein localises to the cytoplasm. The enzyme catalyses UDP-N-acetyl-alpha-D-muramate + NADP(+) = UDP-N-acetyl-3-O-(1-carboxyvinyl)-alpha-D-glucosamine + NADPH + H(+). The protein operates within cell wall biogenesis; peptidoglycan biosynthesis. Cell wall formation. The protein is UDP-N-acetylenolpyruvoylglucosamine reductase of Legionella pneumophila (strain Paris).